A 338-amino-acid chain; its full sequence is Increasing suppression factor 1 (338 aa).

The span at 50-70 (QNSSKSNNSHHSSSTNAGNTS) shows a compositional bias: low complexity. The interval 50–75 (QNSSKSNNSHHSSSTNAGNTSRHIGN) is disordered. Serine 119 bears the Phosphoserine mark. The span at 267-306 (SLLSNGSSSSPLQTRNNSYSNSLVKSPSNSSLNTSVASSN) shows a compositional bias: low complexity. The disordered stretch occupies residues 267–322 (SLLSNGSSSSPLQTRNNSYSNSLVKSPSNSSLNTSVASSNEESSPHTSNCLEERNP). The span at 307–316 (EESSPHTSNC) shows a compositional bias: polar residues.

This sequence belongs to the ISF1/MBR1 family.

Its function is as follows. Could influence the NAM7/UPF1 function, possibly at the level of mRNA turnover. Participates in mitochondrial biogenesis. In Saccharomyces cerevisiae (strain ATCC 204508 / S288c) (Baker's yeast), this protein is Increasing suppression factor 1 (ISF1).